The sequence spans 244 residues: 1-(5-phosphoribosyl)-5-[(5-phosphoribosylamino)methylideneamino] imidazole-4-carboxamide isomerase (244 aa).

The Proton acceptor role is filled by Asp-7. Asp-129 functions as the Proton donor in the catalytic mechanism.

Belongs to the HisA/HisF family.

It is found in the cytoplasm. It catalyses the reaction 1-(5-phospho-beta-D-ribosyl)-5-[(5-phospho-beta-D-ribosylamino)methylideneamino]imidazole-4-carboxamide = 5-[(5-phospho-1-deoxy-D-ribulos-1-ylimino)methylamino]-1-(5-phospho-beta-D-ribosyl)imidazole-4-carboxamide. It participates in amino-acid biosynthesis; L-histidine biosynthesis; L-histidine from 5-phospho-alpha-D-ribose 1-diphosphate: step 4/9. The sequence is that of 1-(5-phosphoribosyl)-5-[(5-phosphoribosylamino)methylideneamino] imidazole-4-carboxamide isomerase from Pseudoalteromonas atlantica (strain T6c / ATCC BAA-1087).